Here is a 330-residue protein sequence, read N- to C-terminus: Thioredoxin domain-containing protein 6 (330 aa).

A Thioredoxin domain is found at 11-115 (QVNISTQELW…QKTILDQLEA (105 aa)). The NDK stretch occupies residues 157–303 (ERTCTLAIIK…LFPSLKFSDK (147 aa)). The disordered stretch occupies residues 300-330 (FSDKDTEAPQGGEAEATAGPTEALCFPEDVD). Residues 307-322 (APQGGEAEATAGPTEA) show a composition bias toward low complexity.

This sequence belongs to the NDK family. As to quaternary structure, monomer and homodimer. In terms of tissue distribution, detected at very low levels in testis, lung and brain.

The protein localises to the cytoplasm. It localises to the cytoskeleton. Its subcellular location is the cilium axoneme. The protein resides in the dynein axonemal particle. May be a regulator of microtubule physiology. The polypeptide is Thioredoxin domain-containing protein 6 (Homo sapiens (Human)).